A 147-amino-acid chain; its full sequence is Small ribosomal subunit protein uS12 (147 aa).

The protein belongs to the universal ribosomal protein uS12 family. Part of the 30S ribosomal subunit.

In terms of biological role, with S4 and S5 plays an important role in translational accuracy. Located at the interface of the 30S and 50S subunits. This chain is Small ribosomal subunit protein uS12, found in Thermofilum pendens (strain DSM 2475 / Hrk 5).